A 120-amino-acid chain; its full sequence is Glycophorin-A (120 aa).

Glutamine 1 bears the Pyrrolidone carboxylic acid mark. The segment at 1-40 (QTIATGSPPIAGTSDLSTITSAATPTFTTEQDGREQGDGL) is disordered. 2 O-linked (GalNAc...) threonine glycosylation sites follow: threonine 2 and threonine 5. Serine 7 carries an O-linked (GalNAc...) serine glycan. Residue threonine 13 is glycosylated (O-linked (GalNAc...) threonine). Residue serine 17 is glycosylated (O-linked (GalNAc...) serine). Residues 17–29 (STITSAATPTFTT) show a composition bias toward low complexity. 2 O-linked (GalNAc...) threonine glycosylation sites follow: threonine 18 and threonine 20. O-linked (GalNAc...) serine glycosylation is present at serine 21. Threonine 24 and threonine 28 each carry an O-linked (GalNAc...) threonine glycan. The chain crosses the membrane as a helical span at residues 50–72 (VITVIILGVMAGIIGIILLLAYV). The disordered stretch occupies residues 78 to 120 (KRPPADVPPPASTVPSADAPPPVSEDDETSLTSVETDYPGDSQ). The span at 82 to 100 (ADVPPPASTVPSADAPPPV) shows a compositional bias: pro residues. Residues 107-120 (SLTSVETDYPGDSQ) show a composition bias toward polar residues. The residue at position 119 (serine 119) is a Phosphoserine.

It belongs to the glycophorin-A family. In terms of assembly, homodimer.

Its subcellular location is the membrane. In terms of biological role, glycophorin A is the major intrinsic membrane sialoglycoprotein of the erythrocyte. Appears to be important for the function of SLC4A1 and is required for high activity of SLC4A1. May be involved in translocation of SLC4A1 to the plasma membrane. In Equus caballus (Horse), this protein is Glycophorin-A.